The following is a 50-amino-acid chain: Large ribosomal subunit protein bL33B (50 aa).

Belongs to the bacterial ribosomal protein bL33 family.

The polypeptide is Large ribosomal subunit protein bL33B (Streptococcus pneumoniae (strain ATCC BAA-255 / R6)).